Consider the following 506-residue polypeptide: Arylsulfatase A (506 aa).

The N-terminal stretch at 1-17 (MALGTLFLALAAGLSTA) is a signal peptide. Residues D28, D29, and C68 each contribute to the Ca(2+) site. C68 (nucleophile) is an active-site residue. C68 carries the post-translational modification 3-oxoalanine (Cys). K122 is a substrate binding site. H124 is an active-site residue. Residue S149 participates in substrate binding. Intrachain disulfides connect C155/C171 and C160/C167. The N-linked (GlcNAc...) asparagine glycan is linked to N157. N183 carries an N-linked (GlcNAc...) asparagine glycan. Substrate is bound at residue H228. Ca(2+) is bound by residues D280 and N281. 4 disulfides stabilise this stretch: C299-C413, C487-C499, C488-C501, and C492-C498. A substrate-binding site is contributed by K301. N-linked (GlcNAc...) asparagine glycosylation occurs at N349.

Belongs to the sulfatase family. As to quaternary structure, homodimer at neutral pH and homooctamer at acidic pH. Exists both as a single chain of 58 kDa (component A) or as a chain of 50 kDa (component B) linked by disulfide bond(s) to a 7 kDa chain (component C). Interacts with SUMF1. Ca(2+) is required as a cofactor. Post-translationally, the conversion to 3-oxoalanine (also known as C-formylglycine, FGly), of a serine or cysteine residue in prokaryotes and of a cysteine residue in eukaryotes, is critical for catalytic activity. This post-translational modification is severely defective in multiple sulfatase deficiency (MSD).

The protein localises to the endoplasmic reticulum. The protein resides in the lysosome. It catalyses the reaction an N-acyl-1-beta-D-(3-O-sulfo)-galactosyl-sphing-4-enine + H2O = a beta-D-galactosyl-(1&lt;-&gt;1')-N-acylsphing-4-enine + sulfate + H(+). In terms of biological role, hydrolyzes cerebroside sulfate. The sequence is that of Arylsulfatase A (Arsa) from Mus musculus (Mouse).